Reading from the N-terminus, the 266-residue chain is GRIP and coiled-coil domain-containing protein C365.11 (266 aa).

The span at 1-13 (METTVSAKNSLEN) shows a compositional bias: polar residues. Positions 1–88 (METTVSAKNS…LDEKVKELEN (88 aa)) are disordered. The residue at position 10 (Ser10) is a Phosphoserine. The segment covering 36 to 49 (ASKKKRKNRKKKKN) has biased composition (basic residues). Over residues 63-88 (EEQRSGSIDSKDKEKPLDEKVKELEN) the composition is skewed to basic and acidic residues. Residues 73-188 (KDKEKPLDEK…ESVKSHESEL (116 aa)) are a coiled coil. Phosphoserine occurs at positions 202 and 204. Positions 216 to 264 (ISKELINKEYARNVLLQFLENHEHRDKILPILSTALDLEEVHQHLILKN) constitute a GRIP domain.

The protein resides in the cytoplasm. This is GRIP and coiled-coil domain-containing protein C365.11 from Schizosaccharomyces pombe (strain 972 / ATCC 24843) (Fission yeast).